The chain runs to 187 residues: Acireductone dioxygenase (187 aa).

Positions 90, 92, 96, and 135 each coordinate Fe(2+). 4 residues coordinate Ni(2+): histidine 90, histidine 92, glutamate 96, and histidine 135.

The protein belongs to the acireductone dioxygenase (ARD) family. Fe(2+) serves as cofactor. Requires Ni(2+) as cofactor.

The protein resides in the cytoplasm. It localises to the nucleus. It catalyses the reaction 1,2-dihydroxy-5-(methylsulfanyl)pent-1-en-3-one + O2 = 4-methylsulfanyl-2-oxobutanoate + formate + 2 H(+). The enzyme catalyses 1,2-dihydroxy-5-(methylsulfanyl)pent-1-en-3-one + O2 = 3-(methylsulfanyl)propanoate + CO + formate + 2 H(+). The protein operates within amino-acid biosynthesis; L-methionine biosynthesis via salvage pathway; L-methionine from S-methyl-5-thio-alpha-D-ribose 1-phosphate: step 5/6. Catalyzes 2 different reactions between oxygen and the acireductone 1,2-dihydroxy-3-keto-5-methylthiopentene (DHK-MTPene) depending upon the metal bound in the active site. Fe-containing acireductone dioxygenase (Fe-ARD) produces formate and 2-keto-4-methylthiobutyrate (KMTB), the alpha-ketoacid precursor of methionine in the methionine recycle pathway. Ni-containing acireductone dioxygenase (Ni-ARD) produces methylthiopropionate, carbon monoxide and formate, and does not lie on the methionine recycle pathway. In Drosophila pseudoobscura pseudoobscura (Fruit fly), this protein is Acireductone dioxygenase.